The sequence spans 657 residues: uncharacterized protein (657 aa).

The signal sequence occupies residues 1-17 (MACVLACVAVLIGAASA).

This is an uncharacterized protein from Orgyia pseudotsugata (Douglas-fir tussock moth).